A 184-amino-acid polypeptide reads, in one-letter code: Ribosome-recycling factor (184 aa).

The protein belongs to the RRF family.

The protein resides in the cytoplasm. Responsible for the release of ribosomes from messenger RNA at the termination of protein biosynthesis. May increase the efficiency of translation by recycling ribosomes from one round of translation to another. This is Ribosome-recycling factor from Bifidobacterium animalis subsp. lactis (strain AD011).